Here is a 651-residue protein sequence, read N- to C-terminus: Acetyl-coenzyme A synthetase (651 aa).

Residues 189 to 192 (RGGK), threonine 311, and asparagine 335 each bind CoA. ATP is bound by residues 387–389 (GEP), 411–416 (DTWWQT), aspartate 500, and arginine 515. Serine 523 contacts CoA. Residue arginine 526 participates in ATP binding. Mg(2+) contacts are provided by valine 537, histidine 539, and valine 542. Position 586 (arginine 586) interacts with CoA. N6-acetyllysine is present on lysine 611.

This sequence belongs to the ATP-dependent AMP-binding enzyme family. Mg(2+) serves as cofactor. Acetylated. Deacetylation by the SIR2-homolog deacetylase activates the enzyme.

It catalyses the reaction acetate + ATP + CoA = acetyl-CoA + AMP + diphosphate. Catalyzes the conversion of acetate into acetyl-CoA (AcCoA), an essential intermediate at the junction of anabolic and catabolic pathways. AcsA undergoes a two-step reaction. In the first half reaction, AcsA combines acetate with ATP to form acetyl-adenylate (AcAMP) intermediate. In the second half reaction, it can then transfer the acetyl group from AcAMP to the sulfhydryl group of CoA, forming the product AcCoA. This chain is Acetyl-coenzyme A synthetase, found in Brucella melitensis biotype 1 (strain ATCC 23456 / CCUG 17765 / NCTC 10094 / 16M).